The chain runs to 329 residues: Beta-ketoacyl-[acyl-carrier-protein] synthase III (329 aa).

Residues Cys123 and His256 contribute to the active site. Residues 257–261 are ACP-binding; sequence QANIR. Asn286 is an active-site residue.

Belongs to the thiolase-like superfamily. FabH family. Homodimer.

The protein localises to the cytoplasm. It catalyses the reaction malonyl-[ACP] + acetyl-CoA + H(+) = 3-oxobutanoyl-[ACP] + CO2 + CoA. The protein operates within lipid metabolism; fatty acid biosynthesis. In terms of biological role, catalyzes the condensation reaction of fatty acid synthesis by the addition to an acyl acceptor of two carbons from malonyl-ACP. Catalyzes the first condensation reaction which initiates fatty acid synthesis and may therefore play a role in governing the total rate of fatty acid production. Possesses both acetoacetyl-ACP synthase and acetyl transacylase activities. Its substrate specificity determines the biosynthesis of branched-chain and/or straight-chain of fatty acids. This Burkholderia cenocepacia (strain HI2424) protein is Beta-ketoacyl-[acyl-carrier-protein] synthase III.